The primary structure comprises 315 residues: Methenyltetrahydromethanopterin cyclohydrolase (315 aa).

It belongs to the MCH family.

The protein resides in the cytoplasm. It catalyses the reaction 5,10-methenyl-5,6,7,8-tetrahydromethanopterin + H2O = N(5)-formyl-5,6,7,8-tetrahydromethanopterin + H(+). Its pathway is one-carbon metabolism; methanogenesis from CO(2); 5,10-methenyl-5,6,7,8-tetrahydromethanopterin from CO(2): step 3/3. Its function is as follows. Catalyzes the reversible interconversion of 5-formyl-H(4)MPT to methenyl-H(4)MPT(+). In Methanospirillum hungatei JF-1 (strain ATCC 27890 / DSM 864 / NBRC 100397 / JF-1), this protein is Methenyltetrahydromethanopterin cyclohydrolase.